Consider the following 100-residue polypeptide: Large ribosomal subunit protein uL23 (100 aa).

It belongs to the universal ribosomal protein uL23 family. Part of the 50S ribosomal subunit. Contacts protein L29, and trigger factor when it is bound to the ribosome.

In terms of biological role, one of the early assembly proteins it binds 23S rRNA. One of the proteins that surrounds the polypeptide exit tunnel on the outside of the ribosome. Forms the main docking site for trigger factor binding to the ribosome. This is Large ribosomal subunit protein uL23 from Bradyrhizobium diazoefficiens (strain JCM 10833 / BCRC 13528 / IAM 13628 / NBRC 14792 / USDA 110).